The primary structure comprises 238 residues: Sugar fermentation stimulation protein homolog (238 aa).

This sequence belongs to the SfsA family.

In Bartonella tribocorum (strain CIP 105476 / IBS 506), this protein is Sugar fermentation stimulation protein homolog.